Consider the following 682-residue polypeptide: DNA-directed RNA polymerase subunit beta' (682 aa).

Positions 69, 71, 87, and 90 each coordinate Zn(2+). The Mg(2+) site is built by D489, D491, and D493.

This sequence belongs to the RNA polymerase beta' chain family. RpoC1 subfamily. In plastids the minimal PEP RNA polymerase catalytic core is composed of four subunits: alpha, beta, beta', and beta''. When a (nuclear-encoded) sigma factor is associated with the core the holoenzyme is formed, which can initiate transcription. Mg(2+) serves as cofactor. It depends on Zn(2+) as a cofactor.

Its subcellular location is the plastid. It is found in the chloroplast. It carries out the reaction RNA(n) + a ribonucleoside 5'-triphosphate = RNA(n+1) + diphosphate. Functionally, DNA-dependent RNA polymerase catalyzes the transcription of DNA into RNA using the four ribonucleoside triphosphates as substrates. The polypeptide is DNA-directed RNA polymerase subunit beta' (Oryza nivara (Indian wild rice)).